The following is a 108-amino-acid chain: Small ribosomal subunit protein bS16 (108 aa).

Residues 82–108 (ESKFSKNTQTENKKPVSKKTTKKSKDN) are disordered. Residues 96 to 108 (PVSKKTTKKSKDN) show a composition bias toward basic residues.

The protein belongs to the bacterial ribosomal protein bS16 family.

This Mycoplasma mycoides subsp. mycoides SC (strain CCUG 32753 / NCTC 10114 / PG1) protein is Small ribosomal subunit protein bS16.